We begin with the raw amino-acid sequence, 414 residues long: Esterase FrsA (414 aa).

Belongs to the FrsA family.

It carries out the reaction a carboxylic ester + H2O = an alcohol + a carboxylate + H(+). Catalyzes the hydrolysis of esters. The chain is Esterase FrsA from Enterobacter sp. (strain 638).